A 337-amino-acid polypeptide reads, in one-letter code: Pyridoxal 5'-phosphate synthase subunit PdxS (337 aa).

Residue Asp65 participates in D-ribose 5-phosphate binding. Lys122 (schiff-base intermediate with D-ribose 5-phosphate) is an active-site residue. Gly194 serves as a coordination point for D-ribose 5-phosphate. Lys206 lines the D-glyceraldehyde 3-phosphate pocket. D-ribose 5-phosphate is bound by residues Gly255 and 276–277 (GS).

It belongs to the PdxS/SNZ family. As to quaternary structure, in the presence of PdxT, forms a dodecamer of heterodimers.

It catalyses the reaction aldehydo-D-ribose 5-phosphate + D-glyceraldehyde 3-phosphate + L-glutamine = pyridoxal 5'-phosphate + L-glutamate + phosphate + 3 H2O + H(+). Its pathway is cofactor biosynthesis; pyridoxal 5'-phosphate biosynthesis. In terms of biological role, catalyzes the formation of pyridoxal 5'-phosphate from ribose 5-phosphate (RBP), glyceraldehyde 3-phosphate (G3P) and ammonia. The ammonia is provided by the PdxT subunit. Can also use ribulose 5-phosphate and dihydroxyacetone phosphate as substrates, resulting from enzyme-catalyzed isomerization of RBP and G3P, respectively. This Pyrobaculum arsenaticum (strain DSM 13514 / JCM 11321 / PZ6) protein is Pyridoxal 5'-phosphate synthase subunit PdxS.